A 98-amino-acid polypeptide reads, in one-letter code: Flagellar hook-basal body complex protein FliE (98 aa).

The protein belongs to the FliE family.

Its subcellular location is the bacterial flagellum basal body. The chain is Flagellar hook-basal body complex protein FliE from Listeria monocytogenes serovar 1/2a (strain ATCC BAA-679 / EGD-e).